The sequence spans 202 residues: Small ribosomal subunit protein uS4c (202 aa).

One can recognise an S4 RNA-binding domain in the interval 90 to 158 (MRLDNIIFRL…ITKNIELSQK (69 aa)).

It belongs to the universal ribosomal protein uS4 family. In terms of assembly, part of the 30S ribosomal subunit. Contacts protein S5. The interaction surface between S4 and S5 is involved in control of translational fidelity.

The protein localises to the plastid. Its subcellular location is the chloroplast. Its function is as follows. One of the primary rRNA binding proteins, it binds directly to 16S rRNA where it nucleates assembly of the body of the 30S subunit. In terms of biological role, with S5 and S12 plays an important role in translational accuracy. The chain is Small ribosomal subunit protein uS4c (rps4) from Marchantia romanica (Liverwort).